The primary structure comprises 231 residues: Large ribosomal subunit protein uL1 (231 aa).

This sequence belongs to the universal ribosomal protein uL1 family. As to quaternary structure, part of the 50S ribosomal subunit.

Functionally, binds directly to 23S rRNA. The L1 stalk is quite mobile in the ribosome, and is involved in E site tRNA release. Protein L1 is also a translational repressor protein, it controls the translation of the L11 operon by binding to its mRNA. The polypeptide is Large ribosomal subunit protein uL1 (Staphylococcus haemolyticus (strain JCSC1435)).